The sequence spans 456 residues: Phospholipase A1 member A (456 aa).

Residues 1–25 (MPPGPWESCFWVGGLLLWLSVGSSG) form the signal peptide. Catalysis depends on serine 166, which acts as the Nucleophile. The active-site Charge relay system is the aspartate 190. The cysteines at positions 245 and 258 are disulfide-linked. Histidine 260 serves as the catalytic Charge relay system. 2 disulfide bridges follow: cysteine 282-cysteine 293 and cysteine 296-cysteine 304. The N-linked (GlcNAc...) asparagine glycan is linked to asparagine 365.

This sequence belongs to the AB hydrolase superfamily. Lipase family.

The protein resides in the secreted. The catalysed reaction is a 1,2-diacyl-sn-glycero-3-phospho-L-serine + H2O = a 2-acyl-sn-glycero-3-phospho-L-serine + a fatty acid + H(+). It catalyses the reaction 1,2-di-(9Z)-octadecenoyl-sn-glycero-3-phospho-L-serine + H2O = 2-(9Z-octadecenoyl)-sn-glycero-3-phospho-L-serine + (9Z)-octadecenoate + H(+). It carries out the reaction 1-hexadecanoyl-2-(5Z,8Z,11Z,14Z-eicosatetraenoyl)-sn-glycero-3-phospho-L-serine + H2O = 2-(5Z,8Z,11Z,14Z)-eicosatetraenoyl-sn-glycero-3-phospho-L-serine + hexadecanoate + H(+). The enzyme catalyses a 1-acyl-sn-glycero-3-phospho-L-serine + H2O = sn-glycero-3-phospho-L-serine + a fatty acid + H(+). The catalysed reaction is 1-(9Z-octadecenoyl)-sn-glycero-3-phospho-L-serine + H2O = sn-glycero-3-phospho-L-serine + (9Z)-octadecenoate + H(+). In terms of biological role, hydrolyzes the ester bond of the acyl group attached at the sn-1 position of phosphatidylserines (phospholipase A1 activity) and 1-acyl-2-lysophosphatidylserines (lysophospholipase activity) in the pathway of phosphatidylserines acyl chain remodeling. Cleaves phosphatidylserines exposed on the outer leaflet of the plasma membrane of apoptotic cells producing 2-acyl-1-lysophosphatidylserines, which in turn enhance mast cell activation and histamine production. Has no activity toward other glycerophospholipids including phosphatidylcholines, phosphatidylethanolamines, phosphatidic acids or phosphatidylinositols, or glycerolipids such as triolein. The protein is Phospholipase A1 member A (PLA1A) of Pongo abelii (Sumatran orangutan).